A 430-amino-acid chain; its full sequence is tRNA(Ile)-lysidine synthase (430 aa).

21–26 (SGGLDS) contacts ATP.

It belongs to the tRNA(Ile)-lysidine synthase family.

Its subcellular location is the cytoplasm. It catalyses the reaction cytidine(34) in tRNA(Ile2) + L-lysine + ATP = lysidine(34) in tRNA(Ile2) + AMP + diphosphate + H(+). Ligates lysine onto the cytidine present at position 34 of the AUA codon-specific tRNA(Ile) that contains the anticodon CAU, in an ATP-dependent manner. Cytidine is converted to lysidine, thus changing the amino acid specificity of the tRNA from methionine to isoleucine. This is tRNA(Ile)-lysidine synthase from Salmonella paratyphi B (strain ATCC BAA-1250 / SPB7).